The following is a 572-amino-acid chain: Probable serine/threonine-protein kinase At1g54610 (572 aa).

Positions 1–89 are disordered; it reads MGCVFGREAA…SNPSKHWRGE (89 aa). The segment covering 9-40 has biased composition (low complexity); the sequence is AATTTTAEAKQAKSSKASSGVVVVGESSVTKS. A compositionally biased stretch (basic and acidic residues) spans 47–67; the sequence is DVEKKKNEEANGDKERKSSKG. Residues 74–83 are compositionally biased toward polar residues; the sequence is KPNPRLSNPS. Positions 118–402 constitute a Protein kinase domain; the sequence is FEKIDKIGQG…ASAALKSEFF (285 aa). ATP is bound by residues 124-132 and Lys147; that span reads IGQGTYSNV. Asp242 acts as the Proton acceptor in catalysis. 2 disordered regions span residues 409–474 and 526–572; these read CEPA…NVDR and SSFN…AVVA. A compositionally biased stretch (basic and acidic residues) spans 419–434; that stretch reads PSKEIDAKRRDEETRR. Residues 554–572 are compositionally biased toward basic residues; it reads SRKKKDNTKSSKGKRAVVA.

It belongs to the protein kinase superfamily. Ser/Thr protein kinase family.

The catalysed reaction is L-seryl-[protein] + ATP = O-phospho-L-seryl-[protein] + ADP + H(+). It catalyses the reaction L-threonyl-[protein] + ATP = O-phospho-L-threonyl-[protein] + ADP + H(+). The sequence is that of Probable serine/threonine-protein kinase At1g54610 from Arabidopsis thaliana (Mouse-ear cress).